The sequence spans 280 residues: Fructose-1,6-bisphosphatase class 1 (280 aa).

Mg(2+) is bound by residues Glu-64, Asp-83, Leu-85, and Asp-86. Substrate contacts are provided by residues 86-89, Tyr-189, and Lys-220; that span reads DGSS. Position 226 (Glu-226) interacts with Mg(2+).

It belongs to the FBPase class 1 family. Homotetramer. The cofactor is Mg(2+).

The protein resides in the cytoplasm. It catalyses the reaction beta-D-fructose 1,6-bisphosphate + H2O = beta-D-fructose 6-phosphate + phosphate. It participates in carbohydrate biosynthesis; gluconeogenesis. The protein is Fructose-1,6-bisphosphatase class 1 of Campylobacter jejuni subsp. jejuni serotype O:2 (strain ATCC 700819 / NCTC 11168).